The chain runs to 270 residues: uncharacterized protein (270 aa).

Residues 166 to 186 (RRKENNISNESVSEEPESPLF) are disordered.

This is an uncharacterized protein from Ostreid herpesvirus 1 (isolate France) (OsHV-1).